The primary structure comprises 177 residues: Ribosome maturation factor RimP (177 aa).

Belongs to the RimP family.

The protein localises to the cytoplasm. Required for maturation of 30S ribosomal subunits. In Methylibium petroleiphilum (strain ATCC BAA-1232 / LMG 22953 / PM1), this protein is Ribosome maturation factor RimP.